Consider the following 440-residue polypeptide: Platelet-activating factor acetylhydrolase (440 aa).

Positions 1-21 (MVPLKLQALFCLLCCLPWVHP) are cleaved as a signal peptide. 3 N-linked (GlcNAc...) asparagine glycosylation sites follow: Asn-59, Asn-75, and Asn-199. The Nucleophile role is filled by Ser-272. Catalysis depends on charge relay system residues Asp-295 and His-350.

The protein belongs to the AB hydrolase superfamily. Lipase family. Post-translationally, N-glycosylated. Plasma.

Its subcellular location is the secreted. It is found in the extracellular space. The enzyme catalyses a 1-O-alkyl-2-acetyl-sn-glycero-3-phosphocholine + H2O = a 1-O-alkyl-sn-glycero-3-phosphocholine + acetate + H(+). It catalyses the reaction 1-O-decyl-2-acetyl-sn-glycero-3-phosphocholine + H2O = 1-O-decyl-sn-glycero-3-phosphocholine + acetate + H(+). The catalysed reaction is 1-O-dodecyl-2-acetyl-sn-glycero-3-phosphocholine + H2O = 1-O-dodecyl-sn-glycero-3-phosphocholine + acetate + H(+). It carries out the reaction 1-O-tetradecyl-2-acetyl-sn-glycero-3-phosphocholine + H2O = 1-O-tetradecyl-sn-glycero-3-phosphocholine + acetate + H(+). The enzyme catalyses 1-O-hexadecyl-2-acetyl-sn-glycero-3-phosphocholine + H2O = 1-O-hexadecyl-sn-glycero-3-phosphocholine + acetate + H(+). It catalyses the reaction 1-O-octadecyl-2-acetyl-sn-glycero-3-phosphocholine + H2O = 1-O-octadecyl-sn-glycero-3-phosphocholine + acetate + H(+). The catalysed reaction is 1-hexadecanoyl-2-acetyl-sn-glycero-3-phosphocholine + H2O = 1-hexadecanoyl-sn-glycero-3-phosphocholine + acetate + H(+). It carries out the reaction 1-hexadecanoyl-2-propionyl-sn-glycero-3-phosphocholine + H2O = propanoate + 1-hexadecanoyl-sn-glycero-3-phosphocholine + H(+). The enzyme catalyses 1-hexadecanoyl-2-butanoyl-sn-glycero-3-phosphocholine + H2O = butanoate + 1-hexadecanoyl-sn-glycero-3-phosphocholine + H(+). It catalyses the reaction 1-hexadecanoyl-2-pentanoyl-sn-glycero-3-phosphocholine + H2O = pentanoate + 1-hexadecanoyl-sn-glycero-3-phosphocholine + H(+). The catalysed reaction is 1-hexadecanoyl-2-glutaroyl-sn-glycero-3-phosphocholine + H2O = glutarate + 1-hexadecanoyl-sn-glycero-3-phosphocholine + H(+). It carries out the reaction 1-hexadecanoyl-2-(5-oxopentanoyl)-sn-glycero-3-phosphocholine + H2O = 5-oxopentanoate + 1-hexadecanoyl-sn-glycero-3-phosphocholine + H(+). The enzyme catalyses 1-hexadecanoyl-2-(9-oxononanoyl)-sn-glycero-3-phosphocholine + H2O = 9-oxononanoate + 1-hexadecanoyl-sn-glycero-3-phosphocholine + H(+). It catalyses the reaction 1-hexadecanoyl-2-[9-hydroperoxy-(10E-octadecenoyl)]-sn-glycero-3-phosphocholine + H2O = 9-hydroperoxy-10E-octadecenoate + 1-hexadecanoyl-sn-glycero-3-phosphocholine + H(+). The catalysed reaction is 1-hexadecanoyl-2-(10-hydroperoxy-8E-octadecenoyl)-sn-glycero-3-phosphocholine + H2O = 10-hydroperoxy-(8E)-octadecenoate + 1-hexadecanoyl-sn-glycero-3-phosphocholine + H(+). Lipoprotein-associated calcium-independent phospholipase A2 involved in phospholipid catabolism during inflammatory and oxidative stress response. At the lipid-aqueous interface, hydrolyzes the ester bond of fatty acyl group attached at sn-2 position of phospholipids (phospholipase A2 activity). Specifically targets phospholipids with a short-chain fatty acyl group at sn-2 position. Can hydrolyze phospholipids with long fatty acyl chains, only if they carry oxidized functional groups. Hydrolyzes and inactivates platelet-activating factor (PAF, 1-O-alkyl-2-acetyl-sn-glycero-3-phosphocholine), a potent pro-inflammatory signaling lipid that acts through PTAFR on various innate immune cells. Hydrolyzes oxidatively truncated phospholipids carrying an aldehyde group at omega position, preventing their accumulation in lipoprotein particles and uncontrolled pro-inflammatory effects. As part of high-density lipoprotein (HDL) particles, can hydrolyze phospholipids having long-chain fatty acyl hydroperoxides at sn-2 position and protect against potential accumulation of these oxylipins in the vascular wall. Catalyzes the release from membrane phospholipids of F2-isoprostanes, lipid biomarkers of cellular oxidative damage. In Mus musculus (Mouse), this protein is Platelet-activating factor acetylhydrolase (Pla2g7).